A 946-amino-acid chain; its full sequence is ATP-dependent 6-phosphofructokinase subunit beta (946 aa).

The segment at 1-559 is N-terminal catalytic PFK domain 1; it reads MISIVNGTST…HLANFMAMNT (559 aa). Residues Gly192, 256-257, and 286-289 contribute to the ATP site; these read RC and GDGS. Asp287 contributes to the Mg(2+) binding site. Beta-D-fructose 6-phosphate is bound by residues 332-334, Arg369, 376-378, Glu433, Arg461, and 467-470; these read SID, MGR, and HVQR. Asp334 acts as the Proton acceptor in catalysis. The tract at residues 560–573 is interdomain linker; the sequence is ANHEKPTLPREKRK. A C-terminal regulatory PFK domain 2 region spans residues 574–946; sequence KIAIINIGAP…LVGRTRLDKP (373 aa). Beta-D-fructose 2,6-bisphosphate-binding positions include Arg644, 702–706, 747–749, Lys833, 839–842, and Arg920; these read TISNN, QGG, and HVQQ.

This sequence belongs to the phosphofructokinase type A (PFKA) family. ATP-dependent PFK group I subfamily. Eukaryotic two domain clade 'E' sub-subfamily. Heterooctamer of 4 alpha and 4 beta chains. Mg(2+) is required as a cofactor.

It is found in the cytoplasm. It catalyses the reaction beta-D-fructose 6-phosphate + ATP = beta-D-fructose 1,6-bisphosphate + ADP + H(+). It participates in carbohydrate degradation; glycolysis; D-glyceraldehyde 3-phosphate and glycerone phosphate from D-glucose: step 3/4. With respect to regulation, allosterically activated by ADP, AMP, or fructose 2,6-bisphosphate, and allosterically inhibited by ATP or citrate. Its function is as follows. Catalyzes the phosphorylation of D-fructose 6-phosphate to fructose 1,6-bisphosphate by ATP, the first committing step of glycolysis. This chain is ATP-dependent 6-phosphofructokinase subunit beta (PFK2), found in Candida albicans (Yeast).